The primary structure comprises 395 residues: Elongation factor Tu (395 aa).

The tr-type G domain occupies 10–204 (KPHLNIGTIG…AVDNWIEEPV (195 aa)). Positions 19–26 (GHVDHGKT) are G1. A GTP-binding site is contributed by 19 to 26 (GHVDHGKT). Thr-26 contacts Mg(2+). The G2 stretch occupies residues 60 to 64 (GITIN). The G3 stretch occupies residues 81-84 (DCPG). Residues 81–85 (DCPGH) and 136–139 (NKVD) each bind GTP. A G4 region spans residues 136–139 (NKVD). Residues 174–176 (SAL) form a G5 region.

The protein belongs to the TRAFAC class translation factor GTPase superfamily. Classic translation factor GTPase family. EF-Tu/EF-1A subfamily. In terms of assembly, monomer.

Its subcellular location is the cytoplasm. The catalysed reaction is GTP + H2O = GDP + phosphate + H(+). Functionally, GTP hydrolase that promotes the GTP-dependent binding of aminoacyl-tRNA to the A-site of ribosomes during protein biosynthesis. In Flavobacterium johnsoniae (strain ATCC 17061 / DSM 2064 / JCM 8514 / BCRC 14874 / CCUG 350202 / NBRC 14942 / NCIMB 11054 / UW101) (Cytophaga johnsonae), this protein is Elongation factor Tu.